The following is a 1022-amino-acid chain: MARVGRVGFLTLAVVFHLMYAYSIFDIYFVSPIVSGMRSFGVEREASAEAPAKRLVLFVADGLRADKAFQALPDPDAPSDLENDEPIYLAPFIRSRALSHGTFGISHTRVPTESRPGHVALIAGLYEDVSAVTTGWKLNPVDFDSVFNRSRHTWSWGSPDILPMFKEGAVPGRIDADTYGEEAEDFSADATKLDIWVFDKVKELFASAKKDPELDAKLREDKLVFFLHLLGLDTTGHAYRPYSKEYLRNIKLVDKGVQEITQLVEDFYGDGKTSFVFTADHGMSDWGSHGDGHPDNTRTPLVVWGSGVASPRYTHEGTITGHEDGVSADWGLDSVQRNDVAQADVAALMAYLVGLDFPTNSVGQLPLGYLDTSPKDKALAALANAQGVLEMYRVKEEQKRDALLRYTPFEPLADNGETSVEARLERIKTLISNKSYDASIQLSSELLLTALEGLRYLQTYDWLFLRTIVSLGYLGWIAYALTTVIDLHVLHGKSESNRTTFSIMFFSSILVALFSVLLYQGSSWRYYLYALFPIFFWEEVFARRKALLAGREILLGHVHSVSGYFAFAIQLLLYVGVLEALVQSYFHRDIFTVCFILGGFWPITYGTKFLGQHKLLSASWALGCFLMSIFTLLPANKVEDMMMISCGSLLMFLTGLLYLIFERSILGQKRSSDPNSVVSSCGSRTIMGAQVGMILLALIVTRSSVASLQAKQGLPLGNQVLGWAILVSSLLLPFLHRLYPNSHYLHRLMVIFLTFSPIFIILTISYEGLFYFVFCMTLLAWVRLEQAIYIHTTAPTREQDHSVANGSLPAKKPSPGNTVVVEGQPYRYRTLSVSDARVALFFFFLLQSGFFSTGNIASVSSFSLDSVYRLIPIFNPFAQGALLILKLLIPFAIISANLGILNHRLEVAPSALFMVVMSISDVMTLNFFYMVRDEGSWLEIGTTISHFCIASFLCTFVAVLEFLSELFISGVDFGHPATTVGSAVAKAVNGSVACGHSPDSDISGEDSTSVGITAKADPDARS.

Over 1–6 (MARVGR) the chain is Cytoplasmic. A helical transmembrane segment spans residues 7–27 (VGFLTLAVVFHLMYAYSIFDI). Over 28 to 466 (YFVSPIVSGM…LQTYDWLFLR (439 aa)) the chain is Lumenal. N-linked (GlcNAc...) asparagine glycans are attached at residues asparagine 148 and asparagine 433. Residues 467–487 (TIVSLGYLGWIAYALTTVIDL) form a helical membrane-spanning segment. The Cytoplasmic portion of the chain corresponds to 488–498 (HVLHGKSESNR). A helical membrane pass occupies residues 499–519 (TTFSIMFFSSILVALFSVLLY). Topologically, residues 520–560 (QGSSWRYYLYALFPIFFWEEVFARRKALLAGREILLGHVHS) are lumenal. Residues 561–581 (VSGYFAFAIQLLLYVGVLEAL) traverse the membrane as a helical segment. Residues 582–589 (VQSYFHRD) lie on the Cytoplasmic side of the membrane. Residues 590-610 (IFTVCFILGGFWPITYGTKFL) traverse the membrane as a helical segment. Topologically, residues 611–614 (GQHK) are lumenal. Residues 615–635 (LLSASWALGCFLMSIFTLLPA) form a helical membrane-spanning segment. The Cytoplasmic portion of the chain corresponds to 636-640 (NKVED). Residues 641-661 (MMMISCGSLLMFLTGLLYLIF) form a helical membrane-spanning segment. The Lumenal segment spans residues 662–685 (ERSILGQKRSSDPNSVVSSCGSRT). Residues 686-706 (IMGAQVGMILLALIVTRSSVA) traverse the membrane as a helical segment. Residues 707–713 (SLQAKQG) lie on the Cytoplasmic side of the membrane. The chain crosses the membrane as a helical span at residues 714–734 (LPLGNQVLGWAILVSSLLLPF). At 735–749 (LHRLYPNSHYLHRLM) the chain is on the lumenal side. The next 2 helical transmembrane spans lie at 750 to 770 (VIFL…EGLF) and 771 to 791 (YFVF…IYIH). The Lumenal segment spans residues 792–837 (TTAPTREQDHSVANGSLPAKKPSPGNTVVVEGQPYRYRTLSVSDAR). Residue asparagine 805 is glycosylated (N-linked (GlcNAc...) asparagine). The chain crosses the membrane as a helical span at residues 838–858 (VALFFFFLLQSGFFSTGNIAS). The Cytoplasmic portion of the chain corresponds to 859–880 (VSSFSLDSVYRLIPIFNPFAQG). The helical transmembrane segment at 881 to 901 (ALLILKLLIPFAIISANLGIL) threads the bilayer. The Lumenal segment spans residues 902-910 (NHRLEVAPS). The chain crosses the membrane as a helical span at residues 911–931 (ALFMVVMSISDVMTLNFFYMV). The Cytoplasmic segment spans residues 932–947 (RDEGSWLEIGTTISHF). The helical transmembrane segment at 948-968 (CIASFLCTFVAVLEFLSELFI) threads the bilayer. Over 969-1022 (SGVDFGHPATTVGSAVAKAVNGSVACGHSPDSDISGEDSTSVGITAKADPDARS) the chain is Lumenal. Asparagine 989 carries N-linked (GlcNAc...) asparagine glycosylation. The disordered stretch occupies residues 998 to 1022 (PDSDISGEDSTSVGITAKADPDARS).

This sequence belongs to the PIGG/PIGN/PIGO family. PIGN subfamily.

It is found in the endoplasmic reticulum membrane. Its pathway is glycolipid biosynthesis; glycosylphosphatidylinositol-anchor biosynthesis. Ethanolamine phosphate transferase involved in glycosylphosphatidylinositol-anchor biosynthesis. Transfers ethanolamine phosphate to the first alpha-1,4-linked mannose of the glycosylphosphatidylinositol precursor of GPI-anchor. The chain is GPI ethanolamine phosphate transferase 1 (mcd4) from Aspergillus oryzae (strain ATCC 42149 / RIB 40) (Yellow koji mold).